The primary structure comprises 466 residues: Uronate isomerase (466 aa).

Belongs to the metallo-dependent hydrolases superfamily. Uronate isomerase family.

It carries out the reaction D-glucuronate = D-fructuronate. The enzyme catalyses aldehydo-D-galacturonate = keto-D-tagaturonate. It functions in the pathway carbohydrate metabolism; pentose and glucuronate interconversion. This chain is Uronate isomerase (uxaC), found in Brucella melitensis biotype 1 (strain ATCC 23456 / CCUG 17765 / NCTC 10094 / 16M).